A 913-amino-acid chain; its full sequence is E3 ubiquitin-protein ligase ZNRF3 (913 aa).

A disordered region spans residues 1–32 (MRPRSGGRPGAPGRRRRRLRRGPRGRRLPPPP). An N-terminal signal peptide occupies residues 1–52 (MRPRSGGRPGAPGRRRRRLRRGPRGRRLPPPPPLPLLLGLLLAAAGPGAARA). Residues 13 to 27 (GRRRRRLRRGPRGRR) show a composition bias toward basic residues. Residues 53-216 (KETAFVEVVL…PRQPTEYFDM (164 aa)) lie on the Extracellular side of the membrane. The chain crosses the membrane as a helical span at residues 217 to 237 (GIFLAFFVVVSLVCLILLVKI). Residues 238–913 (KLKQRRSQNS…GSGPGIGTGA (676 aa)) are Cytoplasmic-facing. The segment at 290 to 331 (CAICLEKYIDGEELRVIPCTHRFHRKCVDPWLLQHHTCPHCR) adopts an RING-type; atypical zinc-finger fold. Disordered regions lie at residues 601 to 669 (AVHL…GLEV) and 855 to 913 (REEE…GTGA). 2 stretches are compositionally biased toward polar residues: residues 634-664 (SGDQ…STSE) and 881-890 (ASLSSAPQDT). The segment covering 903–913 (PGSGPGIGTGA) has biased composition (gly residues).

It belongs to the ZNRF3 family. As to quaternary structure, interacts with LRP6, FZD4, FZD5, FZD6 and FZD8. Interacts with RSPO1; interaction promotes indirect interaction with LGR4 and membrane clearance of ZNRF3. Interacts with LMBR1L.

The protein resides in the cell membrane. The catalysed reaction is S-ubiquitinyl-[E2 ubiquitin-conjugating enzyme]-L-cysteine + [acceptor protein]-L-lysine = [E2 ubiquitin-conjugating enzyme]-L-cysteine + N(6)-ubiquitinyl-[acceptor protein]-L-lysine.. It participates in protein modification; protein ubiquitination. Its activity is regulated as follows. Negatively regulated by R-spondin proteins such as RSPO1: interaction with RSPO1 induces the indirect association between ZNRF3 and LGR4, promoting membrane clearance of ZNRF3. Functionally, E3 ubiquitin-protein ligase that acts as a negative regulator of the Wnt signaling pathway by mediating the ubiquitination and subsequent degradation of Wnt receptor complex components Frizzled and LRP6. Acts on both canonical and non-canonical Wnt signaling pathway. Acts as a tumor suppressor in the intestinal stem cell zone by inhibiting the Wnt signaling pathway, thereby restricting the size of the intestinal stem cell zone. Along with RSPO2 and RNF43, constitutes a master switch that governs limb specification. This Mus musculus (Mouse) protein is E3 ubiquitin-protein ligase ZNRF3 (Znrf3).